The primary structure comprises 267 residues: tRNA pseudouridine synthase A (267 aa).

The active-site Nucleophile is aspartate 55. Tyrosine 111 contributes to the substrate binding site.

The protein belongs to the tRNA pseudouridine synthase TruA family.

It catalyses the reaction uridine(38/39/40) in tRNA = pseudouridine(38/39/40) in tRNA. Its function is as follows. Formation of pseudouridine at positions 38, 39 and 40 in the anticodon stem and loop of transfer RNAs. The protein is tRNA pseudouridine synthase A of Thermococcus onnurineus (strain NA1).